Here is a 546-residue protein sequence, read N- to C-terminus: CTP synthase (546 aa).

Residues M1–L269 form an amidoligase domain region. S15 contacts CTP. S15 provides a ligand contact to UTP. Position 16–21 (S16–I21) interacts with ATP. L-glutamine is bound at residue Y56. ATP is bound at residue D73. Mg(2+) is bound by residues D73 and E143. CTP-binding positions include D150–E152, K190–Q195, and K226. UTP contacts are provided by residues K190–Q195 and K226. A Glutamine amidotransferase type-1 domain is found at H295 to K537. G357 is a binding site for L-glutamine. C384 (nucleophile; for glutamine hydrolysis) is an active-site residue. Residues L385–Q388, E408, and R465 each bind L-glutamine. Catalysis depends on residues H510 and E512.

Belongs to the CTP synthase family. As to quaternary structure, homotetramer.

The catalysed reaction is UTP + L-glutamine + ATP + H2O = CTP + L-glutamate + ADP + phosphate + 2 H(+). The enzyme catalyses L-glutamine + H2O = L-glutamate + NH4(+). It catalyses the reaction UTP + NH4(+) + ATP = CTP + ADP + phosphate + 2 H(+). It participates in pyrimidine metabolism; CTP biosynthesis via de novo pathway; CTP from UDP: step 2/2. With respect to regulation, allosterically activated by GTP, when glutamine is the substrate; GTP has no effect on the reaction when ammonia is the substrate. The allosteric effector GTP functions by stabilizing the protein conformation that binds the tetrahedral intermediate(s) formed during glutamine hydrolysis. Inhibited by the product CTP, via allosteric rather than competitive inhibition. In terms of biological role, catalyzes the ATP-dependent amination of UTP to CTP with either L-glutamine or ammonia as the source of nitrogen. Regulates intracellular CTP levels through interactions with the four ribonucleotide triphosphates. In Christiangramia forsetii (strain DSM 17595 / CGMCC 1.15422 / KT0803) (Gramella forsetii), this protein is CTP synthase.